The sequence spans 86 residues: Mu-theraphotoxin-Cg2a 3 (86 aa).

The N-terminal stretch at 1-21 (MKVSVVITLAVLGVMFVWASA) is a signal peptide. Residues 22-50 (AELKERGSDQRDSPAWIKSMERIFQSEER) constitute a propeptide that is removed on maturation. Disulfide bonds link Cys-52–Cys-66, Cys-59–Cys-71, and Cys-65–Cys-78. Phe-84 is modified (phenylalanine amide).

It belongs to the neurotoxin 10 (Hwtx-1) family. 37 (Jztx-31) subfamily. As to expression, expressed by the venom gland.

Its subcellular location is the secreted. Inhibits both peak current and fast inactivation of voltage-gated sodium channels (Nav) channels. Inhibits the inactivation of Nav on DRG neurons (EC(50)=1.77 uM) and peak current of cardiac myocytes (IC(50)=0.90 uM). The polypeptide is Mu-theraphotoxin-Cg2a 3 (Chilobrachys guangxiensis (Chinese earth tiger tarantula)).